The following is a 433-amino-acid chain: UPF0597 protein DNO_0106 (433 aa).

It belongs to the UPF0597 family.

The polypeptide is UPF0597 protein DNO_0106 (Dichelobacter nodosus (strain VCS1703A)).